The following is a 126-amino-acid chain: Protein ApaG (126 aa).

Positions 2 to 126 (DVIQPCIKIQ…FRLAIPNVLN (125 aa)) constitute an ApaG domain.

The polypeptide is Protein ApaG (Vibrio campbellii (strain ATCC BAA-1116)).